Here is an 89-residue protein sequence, read N- to C-terminus: Small ribosomal subunit protein uS15 (89 aa).

This sequence belongs to the universal ribosomal protein uS15 family. As to quaternary structure, part of the 30S ribosomal subunit. Forms a bridge to the 50S subunit in the 70S ribosome, contacting the 23S rRNA.

In terms of biological role, one of the primary rRNA binding proteins, it binds directly to 16S rRNA where it helps nucleate assembly of the platform of the 30S subunit by binding and bridging several RNA helices of the 16S rRNA. Functionally, forms an intersubunit bridge (bridge B4) with the 23S rRNA of the 50S subunit in the ribosome. The sequence is that of Small ribosomal subunit protein uS15 from Paramagnetospirillum magneticum (strain ATCC 700264 / AMB-1) (Magnetospirillum magneticum).